The chain runs to 146 residues: Hemoglobin subunit beta (146 aa).

Val-1 is subject to N-acetylvaline. Positions 2–146 (DLTAEEKAAV…VANALAHKYH (145 aa)) constitute a Globin domain. At Ser-44 the chain carries Phosphoserine. Lys-59 bears the N6-acetyllysine mark. Residue His-63 participates in heme b binding. N6-acetyllysine is present on Lys-82. His-92 serves as a coordination point for heme b. Position 93 is an S-nitrosocysteine (Cys-93). An N6-acetyllysine modification is found at Lys-144.

Belongs to the globin family. Heterotetramer of two alpha chains and two beta chains. In terms of tissue distribution, red blood cells.

Its function is as follows. Involved in oxygen transport from the lung to the various peripheral tissues. The sequence is that of Hemoglobin subunit beta (HBB) from Rhinoceros unicornis (Greater Indian rhinoceros).